The chain runs to 454 residues: MSTTDTIVAQATPPGRGGVGILRVSGRAASEVAHAVLGKLPKPRYADYLPFKDVDGSTLDQGIALYFPGPNSFTGEDVLELQGHGGPVILDLLLKRILALPGLRIARPGEFSERAFLNDKLDLAQAEAIADLIDASSEQAARSAVNSLQGAFSARIHQLVEALTHLRIYVEAAIDFPDEEIDFLSDGKIEGQLNGVMADLEQVRTEARQGSLLREGMKVVIAGRPNAGKSSLLNALAGREAAIVTDIAGTTRDVLREHIHIDGMPLHIIDTAGLREANDEVERIGIERAWNEIEQADRVLFMVDGTTTDATEPAAIWPEFMARLPATLPITVVRNKADITGETLGLTKVNGHSLIRLSARTGEGIDLLRDHLKQSMGFTSNTEGGFLARRPHLQALETAARHLIQGHEQLVSAYAGELLAEELRLAQQSLSEITGEFSSDDLLGRIFSSFCIGK.

(6S)-5-formyl-5,6,7,8-tetrahydrofolate contacts are provided by Arg-23, Glu-80, and Lys-120. The TrmE-type G domain maps to 216 to 377; it reads GMKVVIAGRP…LRDHLKQSMG (162 aa). Asn-226 is a K(+) binding site. Residues 226–231, 245–251, 270–273, 335–338, and 358–360 contribute to the GTP site; these read NAGKSS, TDIAGTT, DTAG, NKAD, and SAR. Ser-230 contacts Mg(2+). K(+)-binding residues include Thr-245, Ile-247, and Thr-250. A Mg(2+)-binding site is contributed by Thr-251. Lys-454 provides a ligand contact to (6S)-5-formyl-5,6,7,8-tetrahydrofolate.

The protein belongs to the TRAFAC class TrmE-Era-EngA-EngB-Septin-like GTPase superfamily. TrmE GTPase family. As to quaternary structure, homodimer. Heterotetramer of two MnmE and two MnmG subunits. The cofactor is K(+).

It is found in the cytoplasm. In terms of biological role, exhibits a very high intrinsic GTPase hydrolysis rate. Involved in the addition of a carboxymethylaminomethyl (cmnm) group at the wobble position (U34) of certain tRNAs, forming tRNA-cmnm(5)s(2)U34. This is tRNA modification GTPase MnmE from Yersinia pestis.